Reading from the N-terminus, the 87-residue chain is Acetolactate synthase isozyme 2 small subunit (87 aa).

Residues 5-78 form the ACT domain; the sequence is QVNVSARFNP…DVAHVAICQS (74 aa).

Tetramer of two large and two small chains. The cofactor is Mg(2+). Thiamine diphosphate serves as cofactor.

It carries out the reaction 2 pyruvate + H(+) = (2S)-2-acetolactate + CO2. It participates in amino-acid biosynthesis; L-isoleucine biosynthesis; L-isoleucine from 2-oxobutanoate: step 1/4. The protein operates within amino-acid biosynthesis; L-valine biosynthesis; L-valine from pyruvate: step 1/4. The chain is Acetolactate synthase isozyme 2 small subunit (ilvM) from Escherichia coli O6:H1 (strain CFT073 / ATCC 700928 / UPEC).